A 65-amino-acid chain; its full sequence is Large ribosomal subunit protein uL29 (65 aa).

This sequence belongs to the universal ribosomal protein uL29 family.

This chain is Large ribosomal subunit protein uL29, found in Parabacteroides distasonis (strain ATCC 8503 / DSM 20701 / CIP 104284 / JCM 5825 / NCTC 11152).